A 376-amino-acid polypeptide reads, in one-letter code: Queuine tRNA-ribosyltransferase (376 aa).

The active-site Proton acceptor is the aspartate 90. Residues 90–94 (DSGGF), aspartate 144, glutamine 193, and glycine 220 each bind substrate. The tract at residues 251 to 257 (GVGTPED) is RNA binding. The active-site Nucleophile is aspartate 270. Residues 275 to 279 (TRNAR) are RNA binding; important for wobble base 34 recognition. Cysteine 308, cysteine 310, cysteine 313, and histidine 339 together coordinate Zn(2+).

The protein belongs to the queuine tRNA-ribosyltransferase family. In terms of assembly, homodimer. Within each dimer, one monomer is responsible for RNA recognition and catalysis, while the other monomer binds to the replacement base PreQ1. It depends on Zn(2+) as a cofactor.

The catalysed reaction is 7-aminomethyl-7-carbaguanine + guanosine(34) in tRNA = 7-aminomethyl-7-carbaguanosine(34) in tRNA + guanine. It participates in tRNA modification; tRNA-queuosine biosynthesis. Catalyzes the base-exchange of a guanine (G) residue with the queuine precursor 7-aminomethyl-7-deazaguanine (PreQ1) at position 34 (anticodon wobble position) in tRNAs with GU(N) anticodons (tRNA-Asp, -Asn, -His and -Tyr). Catalysis occurs through a double-displacement mechanism. The nucleophile active site attacks the C1' of nucleotide 34 to detach the guanine base from the RNA, forming a covalent enzyme-RNA intermediate. The proton acceptor active site deprotonates the incoming PreQ1, allowing a nucleophilic attack on the C1' of the ribose to form the product. After dissociation, two additional enzymatic reactions on the tRNA convert PreQ1 to queuine (Q), resulting in the hypermodified nucleoside queuosine (7-(((4,5-cis-dihydroxy-2-cyclopenten-1-yl)amino)methyl)-7-deazaguanosine). The chain is Queuine tRNA-ribosyltransferase from Cupriavidus pinatubonensis (strain JMP 134 / LMG 1197) (Cupriavidus necator (strain JMP 134)).